The following is a 792-amino-acid chain: Phenylalanine--tRNA ligase beta subunit (792 aa).

The tRNA-binding domain maps to 39 to 147 (ARTLEKVVVG…ADAPIGKNIQ (109 aa)). Residues 400–475 (PKIPRIILRP…HLYGYDRIPQ (76 aa)) form the B5 domain. Positions 453, 459, 462, and 463 each coordinate Mg(2+). An FDX-ACB domain is found at 697-791 (SKFPSIRRDI…LERKFNAKLR (95 aa)).

Belongs to the phenylalanyl-tRNA synthetase beta subunit family. Type 1 subfamily. As to quaternary structure, tetramer of two alpha and two beta subunits. Mg(2+) is required as a cofactor.

It localises to the cytoplasm. The catalysed reaction is tRNA(Phe) + L-phenylalanine + ATP = L-phenylalanyl-tRNA(Phe) + AMP + diphosphate + H(+). The polypeptide is Phenylalanine--tRNA ligase beta subunit (Coxiella burnetii (strain RSA 493 / Nine Mile phase I)).